We begin with the raw amino-acid sequence, 185 residues long: Ribosome-recycling factor (185 aa).

It belongs to the RRF family.

The protein resides in the cytoplasm. Functionally, responsible for the release of ribosomes from messenger RNA at the termination of protein biosynthesis. May increase the efficiency of translation by recycling ribosomes from one round of translation to another. This Streptococcus agalactiae serotype V (strain ATCC BAA-611 / 2603 V/R) protein is Ribosome-recycling factor.